Consider the following 273-residue polypeptide: Ribosomal RNA small subunit methyltransferase A (273 aa).

S-adenosyl-L-methionine-binding residues include asparagine 18, leucine 20, glycine 45, glutamate 66, aspartate 91, and asparagine 113.

Belongs to the class I-like SAM-binding methyltransferase superfamily. rRNA adenine N(6)-methyltransferase family. RsmA subfamily.

It is found in the cytoplasm. It carries out the reaction adenosine(1518)/adenosine(1519) in 16S rRNA + 4 S-adenosyl-L-methionine = N(6)-dimethyladenosine(1518)/N(6)-dimethyladenosine(1519) in 16S rRNA + 4 S-adenosyl-L-homocysteine + 4 H(+). In terms of biological role, specifically dimethylates two adjacent adenosines (A1518 and A1519) in the loop of a conserved hairpin near the 3'-end of 16S rRNA in the 30S particle. May play a critical role in biogenesis of 30S subunits. In Escherichia coli (strain SE11), this protein is Ribosomal RNA small subunit methyltransferase A.